Reading from the N-terminus, the 379-residue chain is tRNA (guanine(26)-N(2))-dimethyltransferase (379 aa).

A Trm1 methyltransferase domain is found at 4–375; the sequence is VEVLEGKAKI…APYEVFVNVL (372 aa). 5 residues coordinate S-adenosyl-L-methionine: Arg-36, Arg-61, Asp-78, Asp-120, and Ala-121.

Belongs to the class I-like SAM-binding methyltransferase superfamily. Trm1 family.

The catalysed reaction is guanosine(26) in tRNA + 2 S-adenosyl-L-methionine = N(2)-dimethylguanosine(26) in tRNA + 2 S-adenosyl-L-homocysteine + 2 H(+). In terms of biological role, dimethylates a single guanine residue at position 26 of a number of tRNAs using S-adenosyl-L-methionine as donor of the methyl groups. The sequence is that of tRNA (guanine(26)-N(2))-dimethyltransferase from Pyrococcus abyssi (strain GE5 / Orsay).